The chain runs to 95 residues: Large ribosomal subunit protein uL23 (95 aa).

This sequence belongs to the universal ribosomal protein uL23 family. Part of the 50S ribosomal subunit. Contacts protein L29, and trigger factor when it is bound to the ribosome.

In terms of biological role, one of the early assembly proteins it binds 23S rRNA. One of the proteins that surrounds the polypeptide exit tunnel on the outside of the ribosome. Forms the main docking site for trigger factor binding to the ribosome. The protein is Large ribosomal subunit protein uL23 of Desulfotalea psychrophila (strain LSv54 / DSM 12343).